Here is a 311-residue protein sequence, read N- to C-terminus: Probable manganese-dependent inorganic pyrophosphatase (311 aa).

Mn(2+)-binding residues include His9, Asp13, Asp15, Asp75, His97, and Asp149.

The protein belongs to the PPase class C family. Requires Mn(2+) as cofactor.

The protein resides in the cytoplasm. It catalyses the reaction diphosphate + H2O = 2 phosphate + H(+). The protein is Probable manganese-dependent inorganic pyrophosphatase of Lactobacillus helveticus (strain DPC 4571).